Reading from the N-terminus, the 191-residue chain is Protein YceI (191 aa).

Residues 1–22 form the signal peptide; it reads MKKSLLGLTFASLMFSAGSAVA.

It belongs to the UPF0312 family. Type 1 subfamily.

It is found in the periplasm. This is Protein YceI from Escherichia coli O6:H1 (strain CFT073 / ATCC 700928 / UPEC).